The following is a 562-amino-acid chain: NAD-dependent malic enzyme (562 aa).

The active-site Proton donor is Tyr101. Residue Arg154 participates in NAD(+) binding. The Proton acceptor role is filled by Lys172. A divalent metal cation contacts are provided by Glu243, Asp244, and Asp267. Residues Asp267 and Asn415 each contribute to the NAD(+) site.

Belongs to the malic enzymes family. In terms of assembly, homotetramer. Mg(2+) is required as a cofactor. The cofactor is Mn(2+).

It catalyses the reaction (S)-malate + NAD(+) = pyruvate + CO2 + NADH. The enzyme catalyses oxaloacetate + H(+) = pyruvate + CO2. This chain is NAD-dependent malic enzyme, found in Idiomarina loihiensis (strain ATCC BAA-735 / DSM 15497 / L2-TR).